The following is a 465-amino-acid chain: Cysteine--tRNA ligase (465 aa).

Cys-27 is a binding site for Zn(2+). The 'HIGH' region signature appears at Pro-29–Asn-39. 3 residues coordinate Zn(2+): Cys-207, His-232, and Glu-236. Positions Lys-264 to Ser-268 match the 'KMSKS' region motif. Lys-267 serves as a coordination point for ATP.

Belongs to the class-I aminoacyl-tRNA synthetase family. Monomer. Zn(2+) serves as cofactor.

The protein localises to the cytoplasm. The catalysed reaction is tRNA(Cys) + L-cysteine + ATP = L-cysteinyl-tRNA(Cys) + AMP + diphosphate. The protein is Cysteine--tRNA ligase of Clostridium botulinum (strain Loch Maree / Type A3).